Here is a 583-residue protein sequence, read N- to C-terminus: Aspartate--tRNA ligase (583 aa).

Glutamate 174 serves as a coordination point for L-aspartate. The interval glutamine 198–lysine 201 is aspartate. Arginine 220 is a binding site for L-aspartate. Residues arginine 220–glutamate 222 and glutamine 229 contribute to the ATP site. Residue histidine 443 participates in L-aspartate binding. Glutamate 477 provides a ligand contact to ATP. Arginine 484 contacts L-aspartate. Residue glycine 529–arginine 532 participates in ATP binding.

It belongs to the class-II aminoacyl-tRNA synthetase family. Type 1 subfamily. As to quaternary structure, homodimer.

The protein localises to the cytoplasm. The catalysed reaction is tRNA(Asp) + L-aspartate + ATP = L-aspartyl-tRNA(Asp) + AMP + diphosphate. Catalyzes the attachment of L-aspartate to tRNA(Asp) in a two-step reaction: L-aspartate is first activated by ATP to form Asp-AMP and then transferred to the acceptor end of tRNA(Asp). This Streptococcus agalactiae serotype III (strain NEM316) protein is Aspartate--tRNA ligase.